Consider the following 498-residue polypeptide: Polyamine aminopropyltransferase (498 aa).

Helical transmembrane passes span 7–27 (ISVL…GTIA), 35–55 (VTQF…GSWL), 67–87 (FLEI…ILYL), 97–117 (IPLF…IPVL), 134–154 (VLSL…IFFA), and 163–183 (GFIF…VLPL). Positions 196 to 446 (VVVLTLLILG…AGQRPIQFKK (251 aa)) are spermidine synthase. In terms of domain architecture, PABS spans 200-439 (TLLILGFSYS…GEWGFVLAGQ (240 aa)). Gln234 provides a ligand contact to S-methyl-5'-thioadenosine. Spermidine contacts are provided by His264 and Asp288. S-methyl-5'-thioadenosine contacts are provided by residues Asp308 and 342–343 (DA). Asp360 (proton acceptor) is an active-site residue.

This sequence belongs to the spermidine/spermine synthase family. Homodimer or homotetramer.

It is found in the cell membrane. The enzyme catalyses S-adenosyl 3-(methylsulfanyl)propylamine + putrescine = S-methyl-5'-thioadenosine + spermidine + H(+). Its pathway is amine and polyamine biosynthesis; spermidine biosynthesis; spermidine from putrescine: step 1/1. Functionally, catalyzes the irreversible transfer of a propylamine group from the amino donor S-adenosylmethioninamine (decarboxy-AdoMet) to putrescine (1,4-diaminobutane) to yield spermidine. This chain is Polyamine aminopropyltransferase, found in Leptospira interrogans serogroup Icterohaemorrhagiae serovar copenhageni (strain Fiocruz L1-130).